An 892-amino-acid chain; its full sequence is Protein RRP6-like 3 (892 aa).

The 3'-5' exonuclease domain maps to 119–287 (YVWVETESQL…IADSLTTELK (169 aa)). Residues 350 to 436 (SLNAEELVRK…CSHLDDIYKM (87 aa)) enclose the HRDC domain. The segment at 785–811 (VDDSGDGTSEGDGAKELNDTQCNGNTL) is disordered.

The protein localises to the cytoplasm. The protein resides in the cytosol. The protein is Protein RRP6-like 3 of Arabidopsis thaliana (Mouse-ear cress).